A 656-amino-acid polypeptide reads, in one-letter code: Threonine--tRNA ligase (656 aa).

Residues Met-1–Thr-64 form the TGS domain. A catalytic region spans residues Asp-246 to Pro-548. The Zn(2+) site is built by Cys-342, His-393, and His-525.

This sequence belongs to the class-II aminoacyl-tRNA synthetase family. As to quaternary structure, homodimer. Zn(2+) is required as a cofactor.

Its subcellular location is the cytoplasm. It carries out the reaction tRNA(Thr) + L-threonine + ATP = L-threonyl-tRNA(Thr) + AMP + diphosphate + H(+). Functionally, catalyzes the attachment of threonine to tRNA(Thr) in a two-step reaction: L-threonine is first activated by ATP to form Thr-AMP and then transferred to the acceptor end of tRNA(Thr). Also edits incorrectly charged L-seryl-tRNA(Thr). This chain is Threonine--tRNA ligase, found in Chelativorans sp. (strain BNC1).